Reading from the N-terminus, the 526-residue chain is Thymocyte selection-associated high mobility group box protein TOX (526 aa).

Disordered stretches follow at residues 138–178 and 192–264; these read MPDI…PHGQ and GLNM…PQKP. A compositionally biased stretch (polar residues) spans 192-203; it reads GLNMGGSNVPHN. Over residues 209–220 the composition is skewed to low complexity; that stretch reads GSKSATPSPSSS. The segment covering 228 to 245 has biased composition (basic and acidic residues); the sequence is DTSKINGGEKRPASDMGK. A Nuclear localization signal motif is present at residues 237–256; the sequence is KRPASDMGKKPKTPKKKKKK. The segment covering 246-256 has biased composition (basic residues); it reads KPKTPKKKKKK. Positions 261-329 form a DNA-binding region, HMG box; that stretch reads PQKPVSAYAL…EYLKQLAAYR (69 aa).

Belongs to the high motility group (HMG) box superfamily. Interacts with HBO1 complex composed at least of KAT7/HBO1, ING4, MEAF6, and JADE2; this complex is involved in histone acetylation. Interacts with DNMT1, LEO1, PAF1, SAP130 and SIN3A; these interactors regulate chromatin remodeling. Interacts with an array of proteins involved in RNA processing and translation and DNA replication. Expressed in NK cells. Highly expressed in tumor-infiltrating CD8-positive T cells (at protein level).

The protein resides in the nucleus. Functionally, transcriptional regulator with a major role in neural stem cell commitment and corticogenesis as well as in lymphoid cell development and lymphoid tissue organogenesis. Binds to GC-rich DNA sequences in the proximity of transcription start sites and may alter chromatin structure, modifying access of transcription factors to DNA. During cortical development, controls the neural stem cell pool by inhibiting the switch from proliferative to differentiating progenitors. Beyond progenitor cells, promotes neurite outgrowth in newborn neurons migrating to reach the cortical plate. May activate or repress critical genes for neural stem cell fate such as SOX2, EOMES and ROBO2. Plays an essential role in the development of lymphoid tissue-inducer (LTi) cells, a subset necessary for the formation of secondary lymphoid organs: peripheral lymph nodes and Peyer's patches. Acts as a developmental checkpoint and regulates thymocyte positive selection toward T cell lineage commitment. Required for the development of various T cell subsets, including CD4-positive helper T cells, CD8-positive cytotoxic T cells, regulatory T cells and CD1D-dependent natural killer T (NKT) cells. Required for the differentiation of common lymphoid progenitors (CMP) to innate lymphoid cells (ILC). May regulate the NOTCH-mediated gene program, promoting differentiation of the ILC lineage. Required at the progenitor phase of NK cell development in the bone marrow to specify NK cell lineage commitment. Upon chronic antigen stimulation, diverts T cell development by promoting the generation of exhaustive T cells, while suppressing effector and memory T cell programming. May regulate the expression of genes encoding inhibitory receptors such as PDCD1 and induce the exhaustion program, to prevent the overstimulation of T cells and activation-induced cell death. This chain is Thymocyte selection-associated high mobility group box protein TOX, found in Homo sapiens (Human).